The chain runs to 863 residues: MALPRCTWPNYVWRAVMACLVHRGLGAPLTLCMLGCLLQAGHVLSQKLDDVDPLVATNFGKIRGIKKELNNEILGPVIQFLGVPYAAPPTGERRFQPPEPPSPWSDIRNATQFAPVCPQNIIDGRLPEVMLPVWFTNNLDVVSSYVQDQSEDCLYLNIYVPTEDVKRISKECARKPGKKICRKGGPLTKKQTDDLGDNDGAEDEDIRDSGGPKPVMVYIHGGSYMEGTGNLYDGSVLASYGNVIVITVNYRLGVLGFLSTGDQAAKGNYGLLDLIQALRWTSENIGFFGGDPLRITVFGSGAGGSCVNLLTLSHYSEGNRWSNSTKGLFQRAIAQSGTALSSWAVSFQPAKYARMLATKVGCNVSDTVELVECLQKKPYKELVDQDIQPARYHIAFGPVIDGDVIPDDPQILMEQGEFLNYDIMLGVNQGEGLKFVENIVDSDDGISASDFDFAVSNFVDNLYGYPEGKDVLRETIKFMYTDWADRHNPETRRKTLLALFTDHQWVAPAVATADLHSNFGSPTYFYAFYHHCQTDQVPAWADAAHGDEVPYVLGIPMIGPTELFPCNFSKNDVMLSAVVMTYWTNFAKTGDPNQPVPQDTKFIHTKPNRFEEVAWTRYSQKDQLYLHIGLKPRVKEHYRANKVNLWLELVPHLHNLNDISQYTSTTTKVPSTDITFRPTRKNSVPVTSAFPTAKQDDPKQQPSPFSVDQRDYSTELSVTIAVGASLLFLNILAFAALYYKKDKRRHDVHRRCSPQRTTTNDLTHAQEEEIMSLQMKHTDLDHECESIHPHEVVLRTACPPDYTLAMRRSPDDVPLMTPNTITMIPNTIPGIQPLHTFNTFTGGQNNTLPHPHPHPHSHSTTRV.

A signal peptide spans 1 to 45; the sequence is MALPRCTWPNYVWRAVMACLVHRGLGAPLTLCMLGCLLQAGHVLS. The Extracellular segment spans residues 46–717; it reads QKLDDVDPLV…DQRDYSTELS (672 aa). Residue N109 is glycosylated (N-linked (GlcNAc...) (complex) asparagine). C117 and C153 are oxidised to a cystine. A disordered region spans residues 183-212; the sequence is KGGPLTKKQTDDLGDNDGAEDEDIRDSGGP. The span at 194-206 shows a compositional bias: acidic residues; sequence DLGDNDGAEDEDI. 2 N-linked (GlcNAc...) (complex) asparagine glycosylation sites follow: N323 and N363. Intrachain disulfides connect C362–C373 and C532–C566. An N-linked (GlcNAc...) asparagine glycan is attached at N567. Residues 670 to 708 form a disordered region; the sequence is PSTDITFRPTRKNSVPVTSAFPTAKQDDPKQQPSPFSVD. The segment covering 681 to 690 has biased composition (polar residues); sequence KNSVPVTSAF. O-linked (GalNAc...) serine glycosylation is found at S703 and S706. The chain crosses the membrane as a helical span at residues 718 to 738; sequence VTIAVGASLLFLNILAFAALY. The Cytoplasmic segment spans residues 739–863; the sequence is YKKDKRRHDV…HPHSHSTTRV (125 aa). Positions 842-863 are disordered; the sequence is GGQNNTLPHPHPHPHSHSTTRV. Positions 851 to 863 are enriched in basic residues; sequence PHPHPHSHSTTRV.

Belongs to the type-B carboxylesterase/lipase family. In terms of assembly, interacts with neurexins NRXN1, NRXN2 and NRXN3. Interaction with neurexins is mediated by heparan sulfate glycan modification on neurexin. Interacts with NLGN3. Interacts with AIP1 and PDZRN3. Interacts (via its C-terminus) with DLG4/PSD-95 (via PDZ domain 3). Interacts with GOPC. Expressed in the blood vessel walls (at protein level). Highly expressed in brain through prenatal stages, and at lower levels in pancreas islet beta cells.

The protein localises to the cell membrane. It localises to the postsynaptic density. Its subcellular location is the synaptic cleft. It is found in the synaptic cell membrane. Cell surface protein involved in cell-cell-interactions via its interactions with neurexin family members. Plays a role in synapse function and synaptic signal transmission, and probably mediates its effects by recruiting and clustering other synaptic proteins. May promote the initial formation of synapses, but is not essential for this. In vitro, triggers the de novo formation of presynaptic structures. May be involved in specification of excitatory synapses. Required to maintain wakefulness quality and normal synchrony of cerebral cortex activity during wakefulness and sleep. The protein is involved in nervous system development. The chain is Neuroligin-1 (NLGN1) from Homo sapiens (Human).